A 428-amino-acid polypeptide reads, in one-letter code: L-lysine N6-monooxygenase MbtG (428 aa).

The signal sequence occupies residues 1 to 20 (MSTLAILGAGAKAVAVAAKA).

It belongs to the lysine N(6)-hydroxylase/L-ornithine N(5)-oxygenase family. Requires FAD as cofactor.

It catalyses the reaction L-lysine + NADPH + O2 = N(6)-hydroxy-L-lysine + NADP(+) + H2O. The protein operates within siderophore biosynthesis; mycobactin biosynthesis. In terms of biological role, flavoprotein monooxygenase required for N-hydroxylation of the two acylated lysine residues during mycobactin assembly, thus producing the hydroxamate groups necessary for iron sequestration. Is also able, but less efficiently, to hydroxylate L-lysine (non acylated) in vitro. The sequence is that of L-lysine N6-monooxygenase MbtG (mbtG) from Mycolicibacterium paratuberculosis (strain ATCC BAA-968 / K-10) (Mycobacterium paratuberculosis).